Reading from the N-terminus, the 299-residue chain is Nucleoporin POM34 (299 aa).

Residues 1–39 form a disordered region; that stretch reads MKIQAGQLGLDDNDVPGPLPDTDSKPSSQSQNDTPMFKL. Polar residues predominate over residues 25–34; it reads KPSSQSQNDT. The next 2 helical transmembrane spans lie at 64–84 and 133–153; these read IMTNVIAFAFWNLLVKFIKFF and LFHLLISLNILFSLWKLLSTV. The residue at position 270 (Ser-270) is a Phosphoserine. Position 273 is a phosphothreonine (Thr-273). A phosphoserine mark is found at Ser-292 and Ser-294.

In terms of assembly, component of the nuclear pore complex (NPC). NPC constitutes the exclusive means of nucleocytoplasmic transport. NPCs allow the passive diffusion of ions and small molecules and the active, nuclear transport receptor-mediated bidirectional transport of macromolecules such as proteins, RNAs, ribonucleoparticles (RNPs), and ribosomal subunits across the nuclear envelope. Due to its 8-fold rotational symmetry, all subunits are present with 8 copies or multiples thereof.

It localises to the nucleus. It is found in the nuclear pore complex. Its subcellular location is the nucleus membrane. In terms of biological role, functions as a component of the nuclear pore complex (NPC). NPC components, collectively referred to as nucleoporins (NUPs), can play the role of both NPC structural components and of docking or interaction partners for transiently associated nuclear transport factors. This Saccharomyces cerevisiae (strain ATCC 204508 / S288c) (Baker's yeast) protein is Nucleoporin POM34 (POM34).